Reading from the N-terminus, the 275-residue chain is Transmembrane protein 106B (275 aa).

Residues 1–24 (MGKSFSHLPLHSNKEDGYDGMTST) are disordered. A lipid anchor (N-myristoyl glycine) is attached at Gly-2. Residues 2-97 (GKSFSHLPLH…QRLRPRRTKL (96 aa)) are Cytoplasmic-facing. A helical transmembrane segment spans residues 98–118 (YVMASVFVCLLLSGLAVFFLF). The Lumenal portion of the chain corresponds to 119-275 (PRSIDVKYIG…EYLNVLQPQQ (157 aa)). 4 N-linked (GlcNAc...) asparagine glycosylation sites follow: Asn-146, Asn-152, Asn-165, and Asn-184. Cysteines 215 and 254 form a disulfide. Asn-257 carries N-linked (GlcNAc...) asparagine glycosylation.

It belongs to the TMEM106 family. In terms of assembly, can form homomers. Interacts (via N-terminus) with MAP6 (via C-terminus). Interacts (via C-terminus) with the vacuolar-type ATPase subunit ATP6AP1. Interacts (via N-terminus) with AP2M1 and CLTC. Interacts with TMEM106C.

It localises to the late endosome membrane. The protein resides in the lysosome membrane. It is found in the cell membrane. In neurons, involved in the transport of late endosomes/lysosomes. May be involved in dendrite morphogenesis and maintenance by regulating lysosomal trafficking. May act as a molecular brake for retrograde transport of late endosomes/lysosomes, possibly via its interaction with MAP6. In motoneurons, may mediate the axonal transport of lysosomes and axonal sorting at the initial segment. It remains unclear whether TMEM106B affects the transport of moving lysosomes in the anterograde or retrograde direction in neurites and whether it is particularly important in the sorting of lysosomes in axons or in dendrites. In neurons, may also play a role in the regulation of lysosomal size and responsiveness to stress. Required for proper lysosomal acidification. This is Transmembrane protein 106B (TMEM106B) from Bos taurus (Bovine).